The following is a 400-amino-acid chain: Cytohesin-3 (400 aa).

Positions 14-61 (EDLSLEEREELLDIRRRKKELIDDIERLKYEIAEVMTEIDNLTSVEES) form a coiled coil. The SEC7 domain maps to 77-206 (FNMDPKKGIQ…IIMLNTSLHN (130 aa)). The PH domain maps to 265 to 381 (PDREGWLLKL…WMKSIKASIS (117 aa)). Residues 273 to 281 (KLGGGRVKT), Arg-285, Tyr-296, Arg-306, and Asn-355 each bind a 1,2-diacyl-sn-glycero-3-phospho-(1D-myo-inositol-3,4,5-trisphosphate). A C-terminal autoinhibitory region region spans residues 392–400 (RKRRIANKK).

Interacts with TAMALIN. As to expression, present in all tissues tested, with highest protein levels in brain and adrenal.

It is found in the cytoplasm. The protein localises to the cytosol. Its subcellular location is the cell membrane. Functionally, promotes guanine-nucleotide exchange on ARF1. Promotes the activation of ARF factors through replacement of GDP with GTP. This is Cytohesin-3 (Cyth3) from Rattus norvegicus (Rat).